Here is a 352-residue protein sequence, read N- to C-terminus: Holliday junction branch migration complex subunit RuvB (352 aa).

Positions 4–191 (TDKLAAPARV…FGIVARLEFY (188 aa)) are large ATPase domain (RuvB-L). Residues Leu30, Arg31, Gly72, Lys75, Thr76, Thr77, 138–140 (EDY), Arg181, Tyr191, and Arg228 contribute to the ATP site. Thr76 is a binding site for Mg(2+). The tract at residues 192–262 (TADELARIVT…MADAALAMLD (71 aa)) is small ATPAse domain (RuvB-S). Residues 265-352 (SVGFDLMDRK…SGASELFGDA (88 aa)) form a head domain (RuvB-H) region. Positions 301, 320, and 325 each coordinate DNA.

It belongs to the RuvB family. As to quaternary structure, homohexamer. Forms an RuvA(8)-RuvB(12)-Holliday junction (HJ) complex. HJ DNA is sandwiched between 2 RuvA tetramers; dsDNA enters through RuvA and exits via RuvB. An RuvB hexamer assembles on each DNA strand where it exits the tetramer. Each RuvB hexamer is contacted by two RuvA subunits (via domain III) on 2 adjacent RuvB subunits; this complex drives branch migration. In the full resolvosome a probable DNA-RuvA(4)-RuvB(12)-RuvC(2) complex forms which resolves the HJ.

It localises to the cytoplasm. It catalyses the reaction ATP + H2O = ADP + phosphate + H(+). The RuvA-RuvB-RuvC complex processes Holliday junction (HJ) DNA during genetic recombination and DNA repair, while the RuvA-RuvB complex plays an important role in the rescue of blocked DNA replication forks via replication fork reversal (RFR). RuvA specifically binds to HJ cruciform DNA, conferring on it an open structure. The RuvB hexamer acts as an ATP-dependent pump, pulling dsDNA into and through the RuvAB complex. RuvB forms 2 homohexamers on either side of HJ DNA bound by 1 or 2 RuvA tetramers; 4 subunits per hexamer contact DNA at a time. Coordinated motions by a converter formed by DNA-disengaged RuvB subunits stimulates ATP hydrolysis and nucleotide exchange. Immobilization of the converter enables RuvB to convert the ATP-contained energy into a lever motion, pulling 2 nucleotides of DNA out of the RuvA tetramer per ATP hydrolyzed, thus driving DNA branch migration. The RuvB motors rotate together with the DNA substrate, which together with the progressing nucleotide cycle form the mechanistic basis for DNA recombination by continuous HJ branch migration. Branch migration allows RuvC to scan DNA until it finds its consensus sequence, where it cleaves and resolves cruciform DNA. The polypeptide is Holliday junction branch migration complex subunit RuvB (Cupriavidus necator (strain ATCC 17699 / DSM 428 / KCTC 22496 / NCIMB 10442 / H16 / Stanier 337) (Ralstonia eutropha)).